A 311-amino-acid chain; its full sequence is MQRFIKWLAVITSLDLLIVLLGGALVTKTGSGQGCGKSWPLCNGEFVPSNLSMETIIELSHRLTSGSAGILVTLLCILSWKYYKHVRETKTLAILSFVFLVAQALMGAAAVVWGQMPAVLAIHFGISLISFASVILLTCLIFEIDQKFDARSLIMDKKMKFHIYGVTIYSYIVVYTGALVRHERASLACPDFPLCSKNRPMPTQLHEWVQMGHRVAAMLIFAWILYAMILAIRHYKQQPVVYWGWIISFILVTLQAIVGILVVFTNASLSMALLHSLFISCLFAVLCYLVMLGTRSKVNAKEAASTSKQTK.

The Cytoplasmic segment spans residues 1–6 (MQRFIK). A helical transmembrane segment spans residues 7 to 27 (WLAVITSLDLLIVLLGGALVT). Residues 28–62 (KTGSGQGCGKSWPLCNGEFVPSNLSMETIIELSHR) are Extracellular-facing. A disulfide bridge links cysteine 35 with cysteine 42. The active site involves glutamate 58. Histidine 61 contributes to the heme o binding site. A helical transmembrane segment spans residues 63–83 (LTSGSAGILVTLLCILSWKYY). Over 84 to 91 (KHVRETKT) the chain is Cytoplasmic. Residues 92 to 112 (LAILSFVFLVAQALMGAAAVV) form a helical membrane-spanning segment. The Extracellular segment spans residues 113–121 (WGQMPAVLA). The chain crosses the membrane as a helical span at residues 122–142 (IHFGISLISFASVILLTCLIF). A heme o-binding site is contributed by histidine 123. At 143–159 (EIDQKFDARSLIMDKKM) the chain is on the cytoplasmic side. The helical transmembrane segment at 160 to 180 (KFHIYGVTIYSYIVVYTGALV) threads the bilayer. Over 181-211 (RHERASLACPDFPLCSKNRPMPTQLHEWVQM) the chain is Extracellular. Cysteines 189 and 195 form a disulfide. The helical transmembrane segment at 212 to 232 (GHRVAAMLIFAWILYAMILAI) threads the bilayer. Histidine 213 is a binding site for heme b. At 233 to 243 (RHYKQQPVVYW) the chain is on the cytoplasmic side. A helical membrane pass occupies residues 244-264 (GWIISFILVTLQAIVGILVVF). At 265 to 271 (TNASLSM) the chain is on the extracellular side. The chain crosses the membrane as a helical span at residues 272–292 (ALLHSLFISCLFAVLCYLVML). Histidine 275 contributes to the heme b binding site. Residues 293–311 (GTRSKVNAKEAASTSKQTK) are Cytoplasmic-facing.

It belongs to the COX15/CtaA family. Type 1 subfamily. As to quaternary structure, interacts with CtaB. Heme b serves as cofactor.

Its subcellular location is the cell membrane. It catalyses the reaction Fe(II)-heme o + 2 A + H2O = Fe(II)-heme a + 2 AH2. Its pathway is porphyrin-containing compound metabolism; heme A biosynthesis; heme A from heme O: step 1/1. Its function is as follows. Catalyzes the conversion of heme O to heme A by two successive hydroxylations of the methyl group at C8. The first hydroxylation forms heme I, the second hydroxylation results in an unstable dihydroxymethyl group, which spontaneously dehydrates, resulting in the formyl group of heme A. The protein is Heme A synthase of Bacillus cereus (strain ATCC 10987 / NRS 248).